We begin with the raw amino-acid sequence, 93 residues long: Small ribosomal subunit protein uS19 (93 aa).

Belongs to the universal ribosomal protein uS19 family.

Functionally, protein S19 forms a complex with S13 that binds strongly to the 16S ribosomal RNA. The chain is Small ribosomal subunit protein uS19 from Leuconostoc citreum (strain KM20).